We begin with the raw amino-acid sequence, 165 residues long: ADP-ribosylation factor-like protein 3 (165 aa).

Residue Gly-2 is the site of N-myristoyl glycine attachment. Ser-5 carries the post-translational modification Phosphoserine. GTP-binding positions include 24–31 (GLDNAGKT), 67–71 (DIGGQ), and 109–112 (NKQD).

Belongs to the small GTPase superfamily. Arf family. As to quaternary structure, found in a complex with ARL3, RP2 and UNC119 (or UNC119B); RP2 induces hydrolysis of GTP ARL3 in the complex, leading to the release of UNC119 (or UNC119B). Interacts with RP2; interaction is direct and stimulated with the activated GTP-bound form of ARL3. Interacts with SYS1. Interacts with ARL2BP; the GTP-bound form interacts with ARL2BP. Microtubule-associated protein. Does not interact with TBCC. Interacts with RP2. Interacts with PDE6D; the interaction occurs specifically with the GTP-bound form of ARL3. Interacts with GGA1; the interaction recruits PKD1:PKD2 complex to trans-Golgi network and is required for ciliary targeting of PKD1:PKD2 complex. Interacts with DNAAF9.

The protein localises to the golgi apparatus membrane. The protein resides in the cytoplasm. It is found in the cytoskeleton. Its subcellular location is the spindle. It localises to the nucleus. The protein localises to the microtubule organizing center. The protein resides in the centrosome. It is found in the cell projection. Its subcellular location is the cilium. Its function is as follows. Small GTP-binding protein which cycles between an inactive GDP-bound and an active GTP-bound form, and the rate of cycling is regulated by guanine nucleotide exchange factors (GEF) and GTPase-activating proteins (GAP). Required for normal cytokinesis and cilia signaling. Requires assistance from GTPase-activating proteins (GAPs) like RP2 and PDE6D, in order to cycle between inactive GDP-bound and active GTP-bound forms. Required for targeting proteins to the cilium, including myristoylated NPHP3 and prenylated INPP5E. Targets NPHP3 to the ciliary membrane by releasing myristoylated NPHP3 from UNC119B cargo adapter into the cilium. Required for PKD1:PKD2 complex targeting from the trans-Golgi network to the cilium. The polypeptide is ADP-ribosylation factor-like protein 3 (ARL3) (Pongo abelii (Sumatran orangutan)).